The primary structure comprises 371 residues: MSHNTFGHLFRVTTWGESHGAALGCVVDGCPPGIRFTRDEIQAELDKRRPGQSRFVTQRREPDEVKVLSGFVLDEDGETMITTGTPVSMLIENVDQRSKDYGEIARQYRPGHADYTYDVKYGIRDYRGGGRSSARETAARVAAGALARKVVPGMVVRGALVSMGEKSIDRANWNWNFIGDAENPFFTPDPASVPVFTQYLDGIRKAGSSVGAVIEIVADGVPPGLGAPIYAKLDQDIASGLMSINAVKGVEIGNGFEAARITGEQNADEMRIGNDGKPVFLSNNAGGILGGISTGQAIVARFAVKPTSSILTPRKSIDKDGNDVEVMTKGRHDPCVGIRAVPIGEAMVACAIADHYLRHRGQTGKGIGSRE.

2 residues coordinate NADP(+): Arg-48 and Arg-54. FMN is bound by residues 131-133 (RSS), 245-246 (NA), Gly-290, 305-309 (KPTSS), and Arg-331.

The protein belongs to the chorismate synthase family. In terms of assembly, homotetramer. Requires FMNH2 as cofactor.

It carries out the reaction 5-O-(1-carboxyvinyl)-3-phosphoshikimate = chorismate + phosphate. It functions in the pathway metabolic intermediate biosynthesis; chorismate biosynthesis; chorismate from D-erythrose 4-phosphate and phosphoenolpyruvate: step 7/7. Catalyzes the anti-1,4-elimination of the C-3 phosphate and the C-6 proR hydrogen from 5-enolpyruvylshikimate-3-phosphate (EPSP) to yield chorismate, which is the branch point compound that serves as the starting substrate for the three terminal pathways of aromatic amino acid biosynthesis. This reaction introduces a second double bond into the aromatic ring system. This chain is Chorismate synthase, found in Mesorhizobium japonicum (strain LMG 29417 / CECT 9101 / MAFF 303099) (Mesorhizobium loti (strain MAFF 303099)).